Here is a 235-residue protein sequence, read N- to C-terminus: Probable transcriptional regulatory protein Cla_1081 (235 aa).

This sequence belongs to the TACO1 family.

Its subcellular location is the cytoplasm. This chain is Probable transcriptional regulatory protein Cla_1081, found in Campylobacter lari (strain RM2100 / D67 / ATCC BAA-1060).